The primary structure comprises 93 residues: Small ribosomal subunit protein uS19 (93 aa).

The protein belongs to the universal ribosomal protein uS19 family.

Functionally, protein S19 forms a complex with S13 that binds strongly to the 16S ribosomal RNA. This is Small ribosomal subunit protein uS19 from Alkaliphilus metalliredigens (strain QYMF).